Consider the following 492-residue polypeptide: UDP-N-acetylmuramyl-tripeptide synthetase 2 (492 aa).

Position 30 (Ser30) interacts with UDP-N-acetyl-alpha-D-muramoyl-L-alanyl-D-glutamate. Residue 111 to 117 (GTNGKTT) coordinates ATP. UDP-N-acetyl-alpha-D-muramoyl-L-alanyl-D-glutamate is bound by residues 154–155 (TT), Ser181, Gln187, and Arg189. At Lys221 the chain carries N6-carboxylysine.

This sequence belongs to the MurCDEF family. MurE subfamily. Carboxylation is probably crucial for Mg(2+) binding and, consequently, for the gamma-phosphate positioning of ATP.

Its subcellular location is the cytoplasm. It functions in the pathway cell wall biogenesis; peptidoglycan biosynthesis. Its function is as follows. Catalyzes the addition of an amino acid to the nucleotide precursor UDP-N-acetylmuramoyl-L-alanyl-D-glutamate (UMAG) in the biosynthesis of bacterial cell-wall peptidoglycan. In Oceanobacillus iheyensis (strain DSM 14371 / CIP 107618 / JCM 11309 / KCTC 3954 / HTE831), this protein is UDP-N-acetylmuramyl-tripeptide synthetase 2.